The following is a 145-amino-acid chain: Altered inheritance of mitochondria protein 11 (145 aa).

Transmembrane regions (helical) follow at residues 26–48 (MLRF…RGML) and 76–98 (LVLG…CWIA).

It belongs to the AIM11 family.

Its subcellular location is the membrane. This is Altered inheritance of mitochondria protein 11 (AIM11) from Zygosaccharomyces rouxii (strain ATCC 2623 / CBS 732 / NBRC 1130 / NCYC 568 / NRRL Y-229).